Here is a 431-residue protein sequence, read N- to C-terminus: Adenylosuccinate synthetase (431 aa).

Residues 12–18 and 40–42 each bind GTP; these read GDEGKGK and GHT. Catalysis depends on D13, which acts as the Proton acceptor. D13 and G40 together coordinate Mg(2+). Residues 13 to 16, 38 to 41, T128, R142, Q223, T238, and R301 contribute to the IMP site; these read DEGK and NAGH. H41 functions as the Proton donor in the catalytic mechanism. 297–303 provides a ligand contact to substrate; it reads TVTGRPR. GTP contacts are provided by residues R303, 329–331, and 411–413; these read SID and SVG.

The protein belongs to the adenylosuccinate synthetase family. As to quaternary structure, homodimer. Mg(2+) is required as a cofactor.

The protein resides in the cytoplasm. The enzyme catalyses IMP + L-aspartate + GTP = N(6)-(1,2-dicarboxyethyl)-AMP + GDP + phosphate + 2 H(+). The protein operates within purine metabolism; AMP biosynthesis via de novo pathway; AMP from IMP: step 1/2. In terms of biological role, plays an important role in the de novo pathway of purine nucleotide biosynthesis. Catalyzes the first committed step in the biosynthesis of AMP from IMP. This Lacticaseibacillus casei (strain BL23) (Lactobacillus casei) protein is Adenylosuccinate synthetase.